The sequence spans 835 residues: Probable RNA-directed RNA polymerase (835 aa).

It belongs to the totiviridae RNA-directed RNA polymerase family.

The enzyme catalyses RNA(n) + a ribonucleoside 5'-triphosphate = RNA(n+1) + diphosphate. Its function is as follows. RNA-dependent RNA polymerase which replicates the viral genome. Catalyzes the transcription of fully conservative plus-strand genomic RNAs that are extruded from the virion into the cytoplasm where they function as mRNAs for translation of viral proteins and also as substrates for encapsidation to form new virions. Once encapsidated, the positive strand is converted to dsRNA by the RNA-directed RNA polymerase. The sequence is that of Probable RNA-directed RNA polymerase from Helminthosporium victoriae virus-190S (Hv190SV).